A 514-amino-acid polypeptide reads, in one-letter code: 1-pyrroline-5-carboxylate dehydrogenase (514 aa).

Catalysis depends on residues Glu-286 and Cys-320.

It belongs to the aldehyde dehydrogenase family. RocA subfamily.

It carries out the reaction L-glutamate 5-semialdehyde + NAD(+) + H2O = L-glutamate + NADH + 2 H(+). It functions in the pathway amino-acid degradation; L-proline degradation into L-glutamate; L-glutamate from L-proline: step 2/2. The protein is 1-pyrroline-5-carboxylate dehydrogenase of Staphylococcus aureus (strain MRSA252).